The following is a 100-amino-acid chain: MHLTPREREKLLIVTAADLARRRQARGLKLNYPEAVAIITYEIIEGARDGRSVAELMSYGTTILQREQVMAGVAEMIPEVQVEATFPDGTKLVTVHHPIR.

Belongs to the urease gamma subunit family. In terms of assembly, heterotrimer of UreA (gamma), UreB (beta) and UreC (alpha) subunits. Three heterotrimers associate to form the active enzyme.

The protein resides in the cytoplasm. It catalyses the reaction urea + 2 H2O + H(+) = hydrogencarbonate + 2 NH4(+). Its pathway is nitrogen metabolism; urea degradation; CO(2) and NH(3) from urea (urease route): step 1/1. The protein is Urease subunit gamma of Opitutus terrae (strain DSM 11246 / JCM 15787 / PB90-1).